The sequence spans 231 residues: uncharacterized protein (231 aa).

Residues 3 to 119 (RADFCIIGLG…RTMGIREALI (117 aa)) enclose the RCK N-terminal domain. The 88-residue stretch at 134–221 (HGMETEIINL…VNQYLRYINP (88 aa)) folds into the RCK C-terminal domain.

This is an uncharacterized protein from Mycoplasma pneumoniae (strain ATCC 29342 / M129 / Subtype 1) (Mycoplasmoides pneumoniae).